Reading from the N-terminus, the 115-residue chain is Transmembrane protein 14C (115 aa).

Transmembrane regions (helical) follow at residues 8–28 (LVPLHYYGFGYAALVATGGII), 33–53 (AGSVPSLAAGLFFGGLAGLGA), 63–83 (VWVFLATSGTLAGIMGMRFYN), and 88–108 (MPAGLIAGASLLMVAPGVAKI).

This sequence belongs to the TMEM14 family.

The protein localises to the mitochondrion membrane. Functionally, required for normal heme biosynthesis. The chain is Transmembrane protein 14C (Tmem14c) from Rattus norvegicus (Rat).